The primary structure comprises 1120 residues: Transcription-repair-coupling factor (1120 aa).

A Helicase ATP-binding domain is found at 591 to 756; the sequence is DLTNGMLMDR…MTGLKELSII (166 aa). 604 to 611 lines the ATP pocket; sequence GDVGFGKT. The DEEQ box motif lies at 709 to 712; it reads DEEQ. Residues 777-933 form the Helicase C-terminal domain; that stretch reads IIRDALLREH…TIASHDADLR (157 aa).

In the N-terminal section; belongs to the UvrB family. It in the C-terminal section; belongs to the helicase family. RecG subfamily.

The protein resides in the cytoplasm. Functionally, couples transcription and DNA repair by recognizing RNA polymerase (RNAP) stalled at DNA lesions. Mediates ATP-dependent release of RNAP and its truncated transcript from the DNA, and recruitment of nucleotide excision repair machinery to the damaged site. This chain is Transcription-repair-coupling factor, found in Rickettsia prowazekii (strain Madrid E).